The sequence spans 388 residues: tRNA 2-selenouridine synthase (388 aa).

Positions 15–138 (FTADTPLIDV…ARQFLINTID (124 aa)) constitute a Rhodanese domain. Catalysis depends on Cys-98, which acts as the S-selanylcysteine intermediate.

Belongs to the SelU family. In terms of assembly, monomer.

It carries out the reaction 5-methylaminomethyl-2-thiouridine(34) in tRNA + selenophosphate + (2E)-geranyl diphosphate + H2O + H(+) = 5-methylaminomethyl-2-selenouridine(34) in tRNA + (2E)-thiogeraniol + phosphate + diphosphate. The catalysed reaction is 5-methylaminomethyl-2-thiouridine(34) in tRNA + (2E)-geranyl diphosphate = 5-methylaminomethyl-S-(2E)-geranyl-thiouridine(34) in tRNA + diphosphate. The enzyme catalyses 5-methylaminomethyl-S-(2E)-geranyl-thiouridine(34) in tRNA + selenophosphate + H(+) = 5-methylaminomethyl-2-(Se-phospho)selenouridine(34) in tRNA + (2E)-thiogeraniol. It catalyses the reaction 5-methylaminomethyl-2-(Se-phospho)selenouridine(34) in tRNA + H2O = 5-methylaminomethyl-2-selenouridine(34) in tRNA + phosphate. Involved in the post-transcriptional modification of the uridine at the wobble position (U34) of tRNA(Lys), tRNA(Glu) and tRNA(Gln). Catalyzes the conversion of 2-thiouridine (S2U-RNA) to 2-selenouridine (Se2U-RNA). Acts in a two-step process involving geranylation of 2-thiouridine (S2U) to S-geranyl-2-thiouridine (geS2U) and subsequent selenation of the latter derivative to 2-selenouridine (Se2U) in the tRNA chain. The sequence is that of tRNA 2-selenouridine synthase from Nitrosomonas eutropha (strain DSM 101675 / C91 / Nm57).